The primary structure comprises 455 residues: Argininosuccinate lyase (455 aa).

The protein belongs to the lyase 1 family. Argininosuccinate lyase subfamily.

Its subcellular location is the cytoplasm. It catalyses the reaction 2-(N(omega)-L-arginino)succinate = fumarate + L-arginine. The protein operates within amino-acid biosynthesis; L-arginine biosynthesis; L-arginine from L-ornithine and carbamoyl phosphate: step 3/3. In Shewanella denitrificans (strain OS217 / ATCC BAA-1090 / DSM 15013), this protein is Argininosuccinate lyase.